The chain runs to 298 residues: NFU1 iron-sulfur cluster scaffold homolog, mitochondrial (298 aa).

The segment at 190–258 is nifU; it reads IKELLDTRIR…IPEVESVEQV (69 aa). Residues cysteine 227 and cysteine 230 each contribute to the [4Fe-4S] cluster site. Over residues 279-288 the composition is skewed to polar residues; it reads QKESVNQPNA. The disordered stretch occupies residues 279–298; that stretch reads QKESVNQPNAPVNIGGGTPN.

This sequence belongs to the NifU family.

The protein localises to the mitochondrion. Its function is as follows. Molecular scaffold for [Fe-S] cluster assembly of mitochondrial iron-sulfur proteins. This chain is NFU1 iron-sulfur cluster scaffold homolog, mitochondrial, found in Drosophila virilis (Fruit fly).